The following is a 1457-amino-acid chain: Receptor-type tyrosine-protein phosphatase kappa (1457 aa).

Positions 1–25 are cleaved as a signal peptide; sequence MDVAAAALPAFVALWLLYPWPLLGS. The Extracellular segment spans residues 26-752; that stretch reads ALGQFSAGGC…PAKQTDRVVK (727 aa). One can recognise an MAM domain in the interval 30-193; it reads FSAGGCTFDD…IQVLSYPCDK (164 aa). N-linked (GlcNAc...) asparagine glycosylation is found at Asn100, Asn139, and Asn210. Positions 195-280 constitute an Ig-like C2-type domain; it reads PHFLRLGDVE…TQSERGSGVS (86 aa). Cysteines 215 and 269 form a disulfide. Fibronectin type-III domains follow at residues 293–388, 391–487, 490–594, and 595–688; these read PIAP…CAEP, TPKT…TDED, GPVP…SAPS, and LPDY…TVGD. N-linked (GlcNAc...) asparagine glycosylation is found at Asn415, Asn423, Asn435, Asn461, Asn551, Asn585, Asn589, Asn606, and Asn689. Residues 753-774 traverse the membrane as a helical segment; sequence IAGISAGILVFILLLLVVIVIV. Topologically, residues 775–1457 are cytoplasmic; the sequence is KKSKLAKKRK…DVALEYLESS (683 aa). Position 868 is a phosphoserine (Ser868). 2 consecutive Tyrosine-protein phosphatase domains span residues 899 to 1159 and 1191 to 1453; these read FKEE…ILEA and LKDE…ALEY. Residues Asp1068, 1100–1106, and Gln1144 contribute to the substrate site; that span reads CSAGAGR. Cys1100 functions as the Phosphocysteine intermediate in the catalytic mechanism. Catalysis depends on Cys1394, which acts as the Phosphocysteine intermediate.

The protein belongs to the protein-tyrosine phosphatase family. Receptor class 2B subfamily. This protein undergoes proteolytic processing. High levels in liver and kidney. Lower levels in lung, brain and heart. Not seen in spleen and testis.

The protein resides in the membrane. It carries out the reaction O-phospho-L-tyrosyl-[protein] + H2O = L-tyrosyl-[protein] + phosphate. In terms of biological role, regulation of processes involving cell contact and adhesion such as growth control, tumor invasion, and metastasis. Negative regulator of EGFR signaling pathway. Forms complexes with beta-catenin and gamma-catenin/plakoglobin. Beta-catenin may be a substrate for the catalytic activity of PTPRK/PTP-kappa. This chain is Receptor-type tyrosine-protein phosphatase kappa (Ptprk), found in Mus musculus (Mouse).